We begin with the raw amino-acid sequence, 657 residues long: Methionine--tRNA ligase (657 aa).

The short motif at 13-23 (YYPSGNLHIGH) is the 'HIGH' region element. The short motif at 308–312 (KMSKS) is the 'KMSKS' region element. Residue Lys-311 coordinates ATP. In terms of domain architecture, tRNA-binding spans 557 to 657 (DFDKVEIKAA…SAIPNGAVIK (101 aa)).

The protein belongs to the class-I aminoacyl-tRNA synthetase family. MetG type 2B subfamily. As to quaternary structure, homodimer.

The protein localises to the cytoplasm. It carries out the reaction tRNA(Met) + L-methionine + ATP = L-methionyl-tRNA(Met) + AMP + diphosphate. Is required not only for elongation of protein synthesis but also for the initiation of all mRNA translation through initiator tRNA(fMet) aminoacylation. The sequence is that of Methionine--tRNA ligase from Staphylococcus aureus (strain COL).